Consider the following 278-residue polypeptide: Insulin-like growth factor-binding protein-like 1 (278 aa).

The signal sequence occupies residues 1–25 (MPRLSLLLPLLLLLLLPLLPPLSPS). Residues 34–109 (RRPKCGPCRP…PEGTGLCVCA (76 aa)) form the IGFBP N-terminal domain. 7 disulfide bridges follow: Cys-38-Cys-63, Cys-41-Cys-65, Cys-46-Cys-66, Cys-52-Cys-69, Cys-77-Cys-91, Cys-85-Cys-106, and Cys-115-Cys-151. Residues 95–153 (AAGAAPEGTGLCVCAQRGTVCGSDGRSYPSVCALRLRARHTPRAHPGHLHKARDGPCEF) form the Kazal-like domain. The Ig-like C2-type domain occupies 155–259 (PVVVVPPRSV…GEAESHSTVT (105 aa)). Asn-166 carries N-linked (GlcNAc...) asparagine glycosylation. The cysteines at positions 176 and 243 are disulfide-linked.

As to expression, expressed at the highest level in both brain and testis, with lower levels in the prostate, bladder and lung.

It localises to the secreted. In terms of biological role, IGF-binding proteins prolong the half-life of IGFs and have been shown to either inhibit or stimulate the growth promoting effects of the IGFs in cell culture. They alter the interaction of IGFs with their cell surface receptors. May be a putative tumor suppressor protein. This chain is Insulin-like growth factor-binding protein-like 1 (IGFBPL1), found in Homo sapiens (Human).